A 249-amino-acid chain; its full sequence is Triosephosphate isomerase (249 aa).

A substrate-binding site is contributed by 8–10; that stretch reads NWK. The active-site Electrophile is the H95. E163 (proton acceptor) is an active-site residue. Substrate-binding residues include G169 and S209.

The protein belongs to the triosephosphate isomerase family. Homodimer.

The protein resides in the cytoplasm. The enzyme catalyses D-glyceraldehyde 3-phosphate = dihydroxyacetone phosphate. The protein operates within carbohydrate biosynthesis; gluconeogenesis. It functions in the pathway carbohydrate degradation; glycolysis; D-glyceraldehyde 3-phosphate from glycerone phosphate: step 1/1. Functionally, involved in the gluconeogenesis. Catalyzes stereospecifically the conversion of dihydroxyacetone phosphate (DHAP) to D-glyceraldehyde-3-phosphate (G3P). This is Triosephosphate isomerase from Orientia tsutsugamushi (strain Ikeda) (Rickettsia tsutsugamushi).